A 243-amino-acid polypeptide reads, in one-letter code: Adenosylcobinamide-GDP ribazoletransferase (243 aa).

Transmembrane regions (helical) follow at residues 31–51, 57–77, 109–129, 135–155, and 188–208; these read LLFY…LNIA, LLLH…ALHL, IAVV…LALI, MALI…FLTT, and LVIA…VFIW.

This sequence belongs to the CobS family. It depends on Mg(2+) as a cofactor.

It is found in the cell inner membrane. The catalysed reaction is alpha-ribazole + adenosylcob(III)inamide-GDP = adenosylcob(III)alamin + GMP + H(+). The enzyme catalyses alpha-ribazole 5'-phosphate + adenosylcob(III)inamide-GDP = adenosylcob(III)alamin 5'-phosphate + GMP + H(+). It participates in cofactor biosynthesis; adenosylcobalamin biosynthesis; adenosylcobalamin from cob(II)yrinate a,c-diamide: step 7/7. In terms of biological role, joins adenosylcobinamide-GDP and alpha-ribazole to generate adenosylcobalamin (Ado-cobalamin). Also synthesizes adenosylcobalamin 5'-phosphate from adenosylcobinamide-GDP and alpha-ribazole 5'-phosphate. The chain is Adenosylcobinamide-GDP ribazoletransferase from Pseudomonas fluorescens (strain Pf0-1).